The following is a 200-amino-acid chain: MKKELTDRQKKILDFVLSYIDSHGYPPSIRDIARAFRITPRGAIVHLNALEKKGYLTRGKRARSIKVLNRSEAIRLPVVGTIAAGNAIEAIENPTEIIEVPKAMIKIGFDHFLLRVRGESMIEEHILDKDYVVIRKQNTANNGDIVAVLTNSNEATLKKIYIEPEKIILKPANSKMQPIELKPENVKILGKMVGVIRIYG.

The H-T-H motif DNA-binding region spans 29–48 (IRDIARAFRITPRGAIVHLN). Catalysis depends on for autocatalytic cleavage activity residues S120 and K158.

This sequence belongs to the peptidase S24 family. As to quaternary structure, homodimer.

It carries out the reaction Hydrolysis of Ala-|-Gly bond in repressor LexA.. Represses a number of genes involved in the response to DNA damage (SOS response), including recA and lexA. In the presence of single-stranded DNA, RecA interacts with LexA causing an autocatalytic cleavage which disrupts the DNA-binding part of LexA, leading to derepression of the SOS regulon and eventually DNA repair. This chain is LexA repressor, found in Pseudothermotoga lettingae (strain ATCC BAA-301 / DSM 14385 / NBRC 107922 / TMO) (Thermotoga lettingae).